The following is a 308-amino-acid chain: UPF0282 protein STK_23220 (308 aa).

This sequence belongs to the UPF0282 family.

The protein is UPF0282 protein STK_23220 of Sulfurisphaera tokodaii (strain DSM 16993 / JCM 10545 / NBRC 100140 / 7) (Sulfolobus tokodaii).